The following is a 144-amino-acid chain: D-aminoacyl-tRNA deacylase (144 aa).

Residues 136 to 137 carry the Gly-cisPro motif, important for rejection of L-amino acids motif; that stretch reads GP.

The protein belongs to the DTD family. In terms of assembly, homodimer.

It localises to the cytoplasm. It carries out the reaction glycyl-tRNA(Ala) + H2O = tRNA(Ala) + glycine + H(+). The enzyme catalyses a D-aminoacyl-tRNA + H2O = a tRNA + a D-alpha-amino acid + H(+). In terms of biological role, an aminoacyl-tRNA editing enzyme that deacylates mischarged D-aminoacyl-tRNAs. Also deacylates mischarged glycyl-tRNA(Ala), protecting cells against glycine mischarging by AlaRS. Acts via tRNA-based rather than protein-based catalysis; rejects L-amino acids rather than detecting D-amino acids in the active site. By recycling D-aminoacyl-tRNA to D-amino acids and free tRNA molecules, this enzyme counteracts the toxicity associated with the formation of D-aminoacyl-tRNA entities in vivo and helps enforce protein L-homochirality. This is D-aminoacyl-tRNA deacylase from Aliivibrio fischeri (strain MJ11) (Vibrio fischeri).